The chain runs to 68 residues: Lipopolysaccharide export system ATP-binding protein LptB (68 aa).

This sequence belongs to the ABC transporter superfamily. Outer membrane lipopolysaccharide export (TC 1.B.42) family. In terms of assembly, component of the lipopolysaccharide transport and assembly complex. The LptBFG transporter is composed of two ATP-binding proteins (LptB) and two transmembrane proteins (LptF and LptG).

The protein localises to the cytoplasm. Its subcellular location is the cell inner membrane. Part of the ABC transporter complex LptBFG involved in the translocation of lipopolysaccharide (LPS) from the inner membrane to the outer membrane. Probably responsible for energy coupling to the transport system. This chain is Lipopolysaccharide export system ATP-binding protein LptB (lptB), found in Klebsiella oxytoca.